Reading from the N-terminus, the 307-residue chain is Aspartate carbamoyltransferase catalytic subunit (307 aa).

The carbamoyl phosphate site is built by arginine 54 and threonine 55. Lysine 83 is an L-aspartate binding site. Carbamoyl phosphate-binding residues include arginine 104, histidine 132, and glutamine 135. Positions 165 and 228 each coordinate L-aspartate. Carbamoyl phosphate-binding residues include leucine 267 and proline 268.

Belongs to the aspartate/ornithine carbamoyltransferase superfamily. ATCase family. As to quaternary structure, heterododecamer (2C3:3R2) of six catalytic PyrB chains organized as two trimers (C3), and six regulatory PyrI chains organized as three dimers (R2).

It catalyses the reaction carbamoyl phosphate + L-aspartate = N-carbamoyl-L-aspartate + phosphate + H(+). The protein operates within pyrimidine metabolism; UMP biosynthesis via de novo pathway; (S)-dihydroorotate from bicarbonate: step 2/3. Its function is as follows. Catalyzes the condensation of carbamoyl phosphate and aspartate to form carbamoyl aspartate and inorganic phosphate, the committed step in the de novo pyrimidine nucleotide biosynthesis pathway. The protein is Aspartate carbamoyltransferase catalytic subunit of Clostridium botulinum (strain Okra / Type B1).